A 216-amino-acid polypeptide reads, in one-letter code: Large ribosomal subunit protein bL25 (216 aa).

Disordered stretches follow at residues 1–21 (MAET…GAVR) and 192–216 (SADN…GKED). Over residues 195–216 (NEAKTEEAGEDKSEEKSSGKED) the composition is skewed to basic and acidic residues.

It belongs to the bacterial ribosomal protein bL25 family. CTC subfamily. In terms of assembly, part of the 50S ribosomal subunit; part of the 5S rRNA/L5/L18/L25 subcomplex. Contacts the 5S rRNA. Binds to the 5S rRNA independently of L5 and L18.

In terms of biological role, this is one of the proteins that binds to the 5S RNA in the ribosome where it forms part of the central protuberance. This chain is Large ribosomal subunit protein bL25, found in Parvibaculum lavamentivorans (strain DS-1 / DSM 13023 / NCIMB 13966).